Reading from the N-terminus, the 332-residue chain is Adenosine receptor A2b (332 aa).

Over Met-1–Ala-8 the chain is Extracellular. A helical transmembrane segment spans residues Val-9–Gly-33. The Cytoplasmic segment spans residues Thr-34 to Asn-43. The chain crosses the membrane as a helical span at residues Tyr-44–Ile-67. The Extracellular segment spans residues Ser-68–Cys-78. Cys-78 and Cys-170 are disulfide-bonded. A helical transmembrane segment spans residues Leu-79–Val-101. Over Asp-102 to Arg-121 the chain is Cytoplasmic. A helical membrane pass occupies residues Ala-122 to Trp-144. At Asn-145–Pro-177 the chain is on the extracellular side. Residues Asn-152 and Asn-162 are each glycosylated (N-linked (GlcNAc...) asparagine). Residue Glu-173 coordinates adenosine. Residues Met-178–Val-202 form a helical membrane-spanning segment. The Cytoplasmic portion of the chain corresponds to Lys-203 to Ser-234. A helical membrane pass occupies residues Leu-235 to Phe-258. Asn-253 contributes to the adenosine binding site. At Gln-259–Lys-266 the chain is on the extracellular side. Residues Pro-267–Ala-290 traverse the membrane as a helical segment. Positions 278 and 279 each coordinate adenosine. Residues Tyr-291–Leu-332 are Cytoplasmic-facing. Cys-310 is lipidated: S-palmitoyl cysteine.

The protein belongs to the G-protein coupled receptor 1 family.

It is found in the cell membrane. Receptor for adenosine. The activity of this receptor is mediated by G proteins which activate adenylyl cyclase. The protein is Adenosine receptor A2b (ADORA2B) of Bos taurus (Bovine).